The sequence spans 242 residues: Beta-carotene ketolase (242 aa).

The enzyme catalyses all-trans-beta-carotene + 2 AH2 + 2 O2 = echinenone + 2 A + 3 H2O. It catalyses the reaction echinenone + 2 AH2 + 2 O2 = canthaxanthin + 2 A + 3 H2O. It participates in carotenoid biosynthesis; astaxanthin biosynthesis. Its function is as follows. Converts beta-carotene to canthaxanthin via echinenone. The protein is Beta-carotene ketolase of Paracoccus sp. (strain PC1) (Alcaligenes sp. (strain PC1)).